We begin with the raw amino-acid sequence, 350 residues long: Histidinol-phosphate aminotransferase (350 aa).

N6-(pyridoxal phosphate)lysine is present on lysine 210.

This sequence belongs to the class-II pyridoxal-phosphate-dependent aminotransferase family. Histidinol-phosphate aminotransferase subfamily. Homodimer. Pyridoxal 5'-phosphate is required as a cofactor.

The enzyme catalyses L-histidinol phosphate + 2-oxoglutarate = 3-(imidazol-4-yl)-2-oxopropyl phosphate + L-glutamate. It participates in amino-acid biosynthesis; L-histidine biosynthesis; L-histidine from 5-phospho-alpha-D-ribose 1-diphosphate: step 7/9. The chain is Histidinol-phosphate aminotransferase from Pseudomonas syringae pv. syringae (strain B728a).